A 337-amino-acid polypeptide reads, in one-letter code: N-acetyl-gamma-glutamyl-phosphate reductase (337 aa).

Cys149 is a catalytic residue.

This sequence belongs to the NAGSA dehydrogenase family. Type 1 subfamily.

It localises to the cytoplasm. The enzyme catalyses N-acetyl-L-glutamate 5-semialdehyde + phosphate + NADP(+) = N-acetyl-L-glutamyl 5-phosphate + NADPH + H(+). The protein operates within amino-acid biosynthesis; L-arginine biosynthesis; N(2)-acetyl-L-ornithine from L-glutamate: step 3/4. Its function is as follows. Catalyzes the NADPH-dependent reduction of N-acetyl-5-glutamyl phosphate to yield N-acetyl-L-glutamate 5-semialdehyde. This Wolinella succinogenes (strain ATCC 29543 / DSM 1740 / CCUG 13145 / JCM 31913 / LMG 7466 / NCTC 11488 / FDC 602W) (Vibrio succinogenes) protein is N-acetyl-gamma-glutamyl-phosphate reductase.